The sequence spans 357 residues: GTPase Obg (357 aa).

In terms of domain architecture, Obg spans 1 to 159; it reads MKFVDEAEIQ…RTLKLELKLL (159 aa). The OBG-type G domain occupies 160–343; that stretch reads ADIGMLGFPN…IMKSAMTLFE (184 aa). Residues 166–173, 191–195, 213–216, 293–296, and 324–326 each bind GTP; these read GFPNVGKS, FTTLY, DVPG, NKAD, and SAV. Residues serine 173 and threonine 193 each coordinate Mg(2+).

Belongs to the TRAFAC class OBG-HflX-like GTPase superfamily. OBG GTPase family. As to quaternary structure, monomer. Mg(2+) serves as cofactor.

The protein resides in the cytoplasm. Its function is as follows. An essential GTPase which binds GTP, GDP and possibly (p)ppGpp with moderate affinity, with high nucleotide exchange rates and a fairly low GTP hydrolysis rate. Plays a role in control of the cell cycle, stress response, ribosome biogenesis and in those bacteria that undergo differentiation, in morphogenesis control. The chain is GTPase Obg from Xylella fastidiosa (strain M12).